The chain runs to 202 residues: ATP-dependent Clp protease proteolytic subunit 2 (202 aa).

Serine 99 (nucleophile) is an active-site residue. The active site involves histidine 124.

It belongs to the peptidase S14 family. In terms of assembly, fourteen ClpP subunits assemble into 2 heptameric rings which stack back to back to give a disk-like structure with a central cavity, resembling the structure of eukaryotic proteasomes.

The protein resides in the cytoplasm. The enzyme catalyses Hydrolysis of proteins to small peptides in the presence of ATP and magnesium. alpha-casein is the usual test substrate. In the absence of ATP, only oligopeptides shorter than five residues are hydrolyzed (such as succinyl-Leu-Tyr-|-NHMec, and Leu-Tyr-Leu-|-Tyr-Trp, in which cleavage of the -Tyr-|-Leu- and -Tyr-|-Trp bonds also occurs).. Functionally, cleaves peptides in various proteins in a process that requires ATP hydrolysis. Has a chymotrypsin-like activity. Plays a major role in the degradation of misfolded proteins. This Desulfitobacterium hafniense (strain Y51) protein is ATP-dependent Clp protease proteolytic subunit 2.